Consider the following 188-residue polypeptide: MATIGMGDIKKGVRLELDGNPYKVTEFQHVKPGKGAAFVRVKIKNLKTGKVIEKTVHAGDKFEVPELEQKTMQYLYDDGEMLQFMDTTTFDQIGLTHEQVGKETFDFMIDGMEADILFHNGEAISVEIPQTVVLKIVETPPNFKGDSQGGKKPATLESGAVVQVPFHVLEGEMIKVDTVEGKYLEKAK.

Belongs to the elongation factor P family.

Its subcellular location is the cytoplasm. It participates in protein biosynthesis; polypeptide chain elongation. Functionally, involved in peptide bond synthesis. Stimulates efficient translation and peptide-bond synthesis on native or reconstituted 70S ribosomes in vitro. Probably functions indirectly by altering the affinity of the ribosome for aminoacyl-tRNA, thus increasing their reactivity as acceptors for peptidyl transferase. The polypeptide is Elongation factor P (Sulfurovum sp. (strain NBC37-1)).